The following is a 416-amino-acid chain: ATP-dependent Clp protease ATP-binding subunit ClpX (416 aa).

A ClpX-type ZB domain is found at 1–54 (MFKFGDEKGQLKCSFCGKSQEQVRKLVAGPGVYICDECIELCNEIIEEELNDDV). Zn(2+) contacts are provided by Cys-13, Cys-16, Cys-35, and Cys-38. Position 117-124 (117-124 (PTGCGKTL)) interacts with ATP.

This sequence belongs to the ClpX chaperone family. In terms of assembly, component of the ClpX-ClpP complex. Forms a hexameric ring that, in the presence of ATP, binds to fourteen ClpP subunits assembled into a disk-like structure with a central cavity, resembling the structure of eukaryotic proteasomes.

Functionally, ATP-dependent specificity component of the Clp protease. It directs the protease to specific substrates. Can perform chaperone functions in the absence of ClpP. The polypeptide is ATP-dependent Clp protease ATP-binding subunit ClpX (Halothermothrix orenii (strain H 168 / OCM 544 / DSM 9562)).